Here is a 66-residue protein sequence, read N- to C-terminus: UPF0434 protein Mnod_1613 (66 aa).

The protein belongs to the UPF0434 family.

The sequence is that of UPF0434 protein Mnod_1613 from Methylobacterium nodulans (strain LMG 21967 / CNCM I-2342 / ORS 2060).